We begin with the raw amino-acid sequence, 364 residues long: 3-isopropylmalate dehydrogenase (364 aa).

An NAD(+)-binding site is contributed by 79–90; sequence GPKWGTGSVRPE. 4 residues coordinate substrate: R97, R107, R136, and D225. Residues D225, D250, and D254 each contribute to the Mg(2+) site. An NAD(+)-binding site is contributed by 289 to 300; the sequence is GSAPDLPKNKVN.

This sequence belongs to the isocitrate and isopropylmalate dehydrogenases family. In terms of assembly, homodimer. The cofactor is Mg(2+). Requires Mn(2+) as cofactor.

The protein resides in the cytoplasm. The enzyme catalyses (2R,3S)-3-isopropylmalate + NAD(+) = 4-methyl-2-oxopentanoate + CO2 + NADH. It functions in the pathway amino-acid biosynthesis; L-leucine biosynthesis; L-leucine from 3-methyl-2-oxobutanoate: step 3/4. Functionally, catalyzes the oxidation of 3-carboxy-2-hydroxy-4-methylpentanoate (3-isopropylmalate) to 3-carboxy-4-methyl-2-oxopentanoate. The product decarboxylates to 4-methyl-2 oxopentanoate. This Saccharomyces cerevisiae (strain ATCC 204508 / S288c) (Baker's yeast) protein is 3-isopropylmalate dehydrogenase (LEU2).